Here is a 203-residue protein sequence, read N- to C-terminus: Small ribosomal subunit protein uS5 (203 aa).

Residues 49–112 (FEERVVKIKR…KNANNNLIKV (64 aa)) enclose the S5 DRBM domain.

It belongs to the universal ribosomal protein uS5 family. As to quaternary structure, part of the 30S ribosomal subunit. Contacts proteins S4 and S8.

Its function is as follows. With S4 and S12 plays an important role in translational accuracy. In terms of biological role, located at the back of the 30S subunit body where it stabilizes the conformation of the head with respect to the body. In Ureaplasma parvum serovar 3 (strain ATCC 700970), this protein is Small ribosomal subunit protein uS5.